Reading from the N-terminus, the 119-residue chain is Immunoglobulin lambda variable 4-69 (119 aa).

A signal peptide spans 1–20 (MAWTPLLFLTLLLHCTGSLS). The segment at 21–45 (QLVLTQSPSASASLGASVKLTCTLS) is framework-1. One can recognise an Ig-like domain in the interval 21–119 (QLVLTQSPSA…YYCQTWGTGI (99 aa)). Residues cysteine 42 and cysteine 112 are joined by a disulfide bond. The segment at 46–52 (SGHSSYA) is complementarity-determining-1. Residues 53–69 (IAWHQQQPEKGPRYLMK) form a framework-2 region. Residues 70–76 (LNSDGSH) form a complementarity-determining-2 region. The disordered stretch occupies residues 73–92 (DGSHSKGDGIPDRFSGSSSG). Residues 77-112 (SKGDGIPDRFSGSSSGAERYLTISSLQSEDEADYYC) form a framework-3 region. The interval 113 to 119 (QTWGTGI) is complementarity-determining-3.

Immunoglobulins are composed of two identical heavy chains and two identical light chains; disulfide-linked.

The protein localises to the secreted. The protein resides in the cell membrane. In terms of biological role, v region of the variable domain of immunoglobulin light chains that participates in the antigen recognition. Immunoglobulins, also known as antibodies, are membrane-bound or secreted glycoproteins produced by B lymphocytes. In the recognition phase of humoral immunity, the membrane-bound immunoglobulins serve as receptors which, upon binding of a specific antigen, trigger the clonal expansion and differentiation of B lymphocytes into immunoglobulins-secreting plasma cells. Secreted immunoglobulins mediate the effector phase of humoral immunity, which results in the elimination of bound antigens. The antigen binding site is formed by the variable domain of one heavy chain, together with that of its associated light chain. Thus, each immunoglobulin has two antigen binding sites with remarkable affinity for a particular antigen. The variable domains are assembled by a process called V-(D)-J rearrangement and can then be subjected to somatic hypermutations which, after exposure to antigen and selection, allow affinity maturation for a particular antigen. This Homo sapiens (Human) protein is Immunoglobulin lambda variable 4-69.